Reading from the N-terminus, the 319-residue chain is Glycine--tRNA ligase alpha subunit (319 aa).

The disordered stretch occupies residues 290 to 319; that stretch reads RQQQPEAPAPGPAAVVGGRDRKDACDVKEG. Basic and acidic residues predominate over residues 307–319; sequence GRDRKDACDVKEG.

Belongs to the class-II aminoacyl-tRNA synthetase family. As to quaternary structure, tetramer of two alpha and two beta subunits.

The protein resides in the cytoplasm. The catalysed reaction is tRNA(Gly) + glycine + ATP = glycyl-tRNA(Gly) + AMP + diphosphate. The sequence is that of Glycine--tRNA ligase alpha subunit from Moorella thermoacetica (strain ATCC 39073 / JCM 9320).